The chain runs to 1599 residues: Protein TOPAZ1 (1599 aa).

4 disordered regions span residues 1–42 (MVAQ…KESL), 159–185 (GCMH…TDPS), 802–836 (PNVA…VPDP), and 867–889 (VTHE…SSDL). 2 stretches are compositionally biased toward basic and acidic residues: residues 168–183 (SKSK…DKTD) and 805–832 (AEEH…RELP). The segment covering 874-884 (NEKPGGLSEQT) has biased composition (polar residues).

In terms of tissue distribution, expressed in both adult testis and fetal ovary, mostly in germ cells (at protein level).

Its subcellular location is the cytoplasm. It is found in the cytosol. Important for normal spermatogenesis and male fertility. Specifically required for progression to the post-meiotic stages of spermatocyte development. Seems to be necessary for normal expression levels of a number of testis-expressed gene transcripts, although its role in this process is unclear. In Ovis aries (Sheep), this protein is Protein TOPAZ1 (TOPAZ1).